Consider the following 61-residue polypeptide: Large ribosomal subunit protein bL28 (61 aa).

The tract at residues 1–21 (MAKDYVTGKKTTFGNKRSHAM) is disordered.

It belongs to the bacterial ribosomal protein bL28 family.

The polypeptide is Large ribosomal subunit protein bL28 (Lactobacillus helveticus (strain DPC 4571)).